Reading from the N-terminus, the 267-residue chain is Luciferase (267 aa).

The N-linked (GlcNAc...) asparagine glycan is linked to N4. Residues 17 to 39 form a helical membrane-spanning segment; sequence LSSRSIAITCGVVLASAIAFPII.

The protein belongs to the fungal luciferase family.

The protein resides in the membrane. The catalysed reaction is 3-hydroxyhispidin + O2 = (E)-caffeoylpyruvate + hnu + CO2. It carries out the reaction 3-hydroxyhispidin + O2 = 4-[(E)-2-(3,4-dihydroxyphenyl)ethenyl]-1,7-dihydroxy-2,3,5-trioxabicyclo[2.2.2]oct-7-en-6-one. Functionally, luciferase; part of the gene cluster that mediates the fungal bioluminescence cycle. Uses the fungal luciferin 3-hydroxyhispidin as a substrate to produce an endoperoxide as a high-energy intermediate with decomposition that yields oxyluciferin (also known as caffeoylpyruvate) and light emission. The fungal bioluminescence cycle begins with the hispidin synthetase that catalyzes the formation of hispidin which is further hydroxylated by the hispidin-3-hydroxylase, yielding the fungal luciferin 3-hydroxyhispidin. The luciferase then produces an endoperoxide as a high-energy intermediate with decomposition that yields oxyluciferin and light emission. Oxyluciferin can be recycled to caffeic acid by caffeoylpyruvate hydrolase. The sequence is that of Luciferase from Neonothopanus nambi (Agaricus nambi).